A 200-amino-acid polypeptide reads, in one-letter code: A-type ATP synthase subunit E (200 aa).

It belongs to the V-ATPase E subunit family. Has multiple subunits with at least A(3), B(3), C, D, E, F, H, I and proteolipid K(x).

The protein resides in the cell membrane. In terms of biological role, component of the A-type ATP synthase that produces ATP from ADP in the presence of a proton gradient across the membrane. This chain is A-type ATP synthase subunit E, found in Methanopyrus kandleri (strain AV19 / DSM 6324 / JCM 9639 / NBRC 100938).